The following is a 446-amino-acid chain: Bifunctional protein GlmU (446 aa).

The tract at residues 1-226 (MLAIAILAAG…PFEIKGINDR (226 aa)) is pyrophosphorylase. UDP-N-acetyl-alpha-D-glucosamine contacts are provided by residues 7 to 10 (LAAG), Lys21, Gln73, and 78 to 79 (GT). Asp103 is a Mg(2+) binding site. UDP-N-acetyl-alpha-D-glucosamine is bound by residues Gly140, Glu155, Asn170, and Asn224. Asn224 serves as a coordination point for Mg(2+). Residues 227-247 (VQLSECEHYIQEELKSLWMSK) are linker. Positions 248–446 (GVSFVDPISC…SKAIIRTKAD (199 aa)) are N-acetyltransferase. 2 residues coordinate UDP-N-acetyl-alpha-D-glucosamine: Arg329 and Lys347. His359 acts as the Proton acceptor in catalysis. UDP-N-acetyl-alpha-D-glucosamine contacts are provided by Tyr362 and Asn373. Acetyl-CoA is bound by residues Ala376, Ala419, and Arg436.

It in the N-terminal section; belongs to the N-acetylglucosamine-1-phosphate uridyltransferase family. The protein in the C-terminal section; belongs to the transferase hexapeptide repeat family. As to quaternary structure, homotrimer. It depends on Mg(2+) as a cofactor.

Its subcellular location is the cytoplasm. It carries out the reaction alpha-D-glucosamine 1-phosphate + acetyl-CoA = N-acetyl-alpha-D-glucosamine 1-phosphate + CoA + H(+). The catalysed reaction is N-acetyl-alpha-D-glucosamine 1-phosphate + UTP + H(+) = UDP-N-acetyl-alpha-D-glucosamine + diphosphate. The protein operates within nucleotide-sugar biosynthesis; UDP-N-acetyl-alpha-D-glucosamine biosynthesis; N-acetyl-alpha-D-glucosamine 1-phosphate from alpha-D-glucosamine 6-phosphate (route II): step 2/2. It functions in the pathway nucleotide-sugar biosynthesis; UDP-N-acetyl-alpha-D-glucosamine biosynthesis; UDP-N-acetyl-alpha-D-glucosamine from N-acetyl-alpha-D-glucosamine 1-phosphate: step 1/1. It participates in bacterial outer membrane biogenesis; LPS lipid A biosynthesis. Its function is as follows. Catalyzes the last two sequential reactions in the de novo biosynthetic pathway for UDP-N-acetylglucosamine (UDP-GlcNAc). The C-terminal domain catalyzes the transfer of acetyl group from acetyl coenzyme A to glucosamine-1-phosphate (GlcN-1-P) to produce N-acetylglucosamine-1-phosphate (GlcNAc-1-P), which is converted into UDP-GlcNAc by the transfer of uridine 5-monophosphate (from uridine 5-triphosphate), a reaction catalyzed by the N-terminal domain. The sequence is that of Bifunctional protein GlmU from Prochlorococcus marinus (strain NATL2A).